The following is a 277-amino-acid chain: Large ribosomal subunit protein uL2 (277 aa).

Residues 225-277 (AMNPVDHPHGGGEGKTSGGRHPVSPWGRPEGKTRRANKPSDRFIIRRKSRKRR) are disordered. Residues 253 to 268 (PEGKTRRANKPSDRFI) show a composition bias toward basic and acidic residues.

The protein belongs to the universal ribosomal protein uL2 family. As to quaternary structure, part of the 50S ribosomal subunit. Forms a bridge to the 30S subunit in the 70S ribosome.

Its function is as follows. One of the primary rRNA binding proteins. Required for association of the 30S and 50S subunits to form the 70S ribosome, for tRNA binding and peptide bond formation. It has been suggested to have peptidyltransferase activity; this is somewhat controversial. Makes several contacts with the 16S rRNA in the 70S ribosome. The polypeptide is Large ribosomal subunit protein uL2 (Tropheryma whipplei (strain TW08/27) (Whipple's bacillus)).